Consider the following 156-residue polypeptide: Small ribosomal subunit protein uS7 (156 aa).

Belongs to the universal ribosomal protein uS7 family. As to quaternary structure, part of the 30S ribosomal subunit. Contacts proteins S9 and S11.

In terms of biological role, one of the primary rRNA binding proteins, it binds directly to 16S rRNA where it nucleates assembly of the head domain of the 30S subunit. Is located at the subunit interface close to the decoding center, probably blocks exit of the E-site tRNA. This Clavibacter sepedonicus (Clavibacter michiganensis subsp. sepedonicus) protein is Small ribosomal subunit protein uS7.